Reading from the N-terminus, the 57-residue chain is Aspartyl-phosphate phosphatase YnzD (57 aa).

This sequence belongs to the spo0E family.

Aspartyl-phosphate phosphatase which specifically dephosphorylates the sporulation transcription factor Spo0A-P and negatively regulates the sporulation initiation pathway in order to control the proper timing of sporulation. In Bacillus subtilis (strain 168), this protein is Aspartyl-phosphate phosphatase YnzD (ynzD).